Reading from the N-terminus, the 494-residue chain is NADH-quinone oxidoreductase subunit N 2 (494 aa).

The next 14 helical transmembrane spans lie at 14–34, 45–65, 82–102, 116–136, 139–159, 174–194, 214–234, 262–282, 289–309, 317–337, 344–364, 388–408, 422–442, and 470–490; these read LPQIALTVAAFFVLACDGMLL, IAMLLSVAGSLVALALLPLTA, VVQVVLLLFTLAVTLLSGSVL, IGEFFALLLFATVAALFLVST, LLLIFLAVEFLSLVLYILTAF, FLFGGMSAGFLLFGISLLYGV, LLVAIVLVILGFGFKIAAAPF, FFVFAQVLFIGVASASGNAAW, WMPILAAVAVLSMLLGNLAAL, LLAYSAIGHAGYLLLGLIAHT, LLYYVFTYALAVLGAFGVLAI, ACLLVFLLSLAGIPPLVGFFA, AFGLLWLVILAILMSVVALFY, and ITLLVMAALTLLLGCAPNLLM.

It belongs to the complex I subunit 2 family. As to quaternary structure, NDH-1 is composed of 14 different subunits. Subunits NuoA, H, J, K, L, M, N constitute the membrane sector of the complex.

The protein localises to the cell inner membrane. It catalyses the reaction a quinone + NADH + 5 H(+)(in) = a quinol + NAD(+) + 4 H(+)(out). Its function is as follows. NDH-1 shuttles electrons from NADH, via FMN and iron-sulfur (Fe-S) centers, to quinones in the respiratory chain. The immediate electron acceptor for the enzyme in this species is believed to be ubiquinone. Couples the redox reaction to proton translocation (for every two electrons transferred, four hydrogen ions are translocated across the cytoplasmic membrane), and thus conserves the redox energy in a proton gradient. This is NADH-quinone oxidoreductase subunit N 2 from Acidobacterium capsulatum (strain ATCC 51196 / DSM 11244 / BCRC 80197 / JCM 7670 / NBRC 15755 / NCIMB 13165 / 161).